The following is a 661-amino-acid chain: Transketolase (661 aa).

S2 is subject to N-acetylserine. H31 lines the substrate pocket. Thiamine diphosphate-binding positions include H71 and 119-121 (GPL). D160 serves as a coordination point for Mg(2+). Residues G161 and N190 each coordinate thiamine diphosphate. Mg(2+) is bound by residues N190 and V192. Residues H267, R359, and S386 each contribute to the substrate site. H267 is a thiamine diphosphate binding site. The Proton donor role is filled by E413. F439 is a binding site for thiamine diphosphate. Residues H463, D471, and R522 each coordinate substrate.

It belongs to the transketolase family. As to quaternary structure, homodimer. Requires Mg(2+) as cofactor. The cofactor is Ca(2+). Mn(2+) is required as a cofactor. Co(2+) serves as cofactor. It depends on thiamine diphosphate as a cofactor.

It carries out the reaction D-sedoheptulose 7-phosphate + D-glyceraldehyde 3-phosphate = aldehydo-D-ribose 5-phosphate + D-xylulose 5-phosphate. In terms of biological role, catalyzes the transfer of a two-carbon ketol group from a ketose donor to an aldose acceptor, via a covalent intermediate with the cofactor thiamine pyrophosphate. The polypeptide is Transketolase (tkt-1) (Dictyostelium discoideum (Social amoeba)).